We begin with the raw amino-acid sequence, 210 residues long: MMTNFKFALKNLKVNFTSENIDKLRFYIEKVLLFSDRFNLVSNNVRNFDAMLLHALDSVSGLPIVKDKNPRQVLDVGSGAGFPGIVLALFDRCRKYVLLERSNKKAIFLKMISLELGLENVEVLEHNVEEEQNKYEFITIRAFGDIRKYANILGSILKSGGLIMAYKGKFDKVEFEMSYVKNLFDKVEIKSSELISDKERYFLLLYDYKC.

Residues Gly77, Phe82, 100 to 102, 128 to 129, and Arg141 each bind S-adenosyl-L-methionine; these read ERS and VE.

The protein belongs to the methyltransferase superfamily. RNA methyltransferase RsmG family.

Its subcellular location is the cytoplasm. In terms of biological role, specifically methylates the N7 position of a guanine in 16S rRNA. The protein is Ribosomal RNA small subunit methyltransferase G of Borrelia duttonii (strain Ly).